We begin with the raw amino-acid sequence, 178 residues long: Fatty-acid and retinol-binding protein 1 (178 aa).

The N-terminal stretch at 1–16 is a signal peptide; the sequence is MYHQLILMALIGVIMA. Coiled coils occupy residues 67-89 and 122-154; these read DAALEALKNKSDKLYQKAVELRN and QKLDMEKLKQAARDIIAKYEALNEETKEELKAT.

This sequence belongs to the fatty-acid and retinol-binding protein (FARBP) family. Post-translationally, not glycosylated.

It localises to the secreted. Functionally, binds retinol and different fatty acids. This chain is Fatty-acid and retinol-binding protein 1, found in Litomosoides sigmodontis (Filarial nematode worm).